The chain runs to 578 residues: Probable arginine--tRNA ligase, mitochondrial (578 aa).

A mitochondrion-targeting transit peptide spans Met-1–Val-16. Residues Ser-133–Asn-135, His-144, Tyr-322, Asp-326, and Gln-350 each bind L-arginine. A 'HIGH' region motif is present at residues Ser-133–His-144. N6-acetyllysine is present on Lys-568.

Belongs to the class-I aminoacyl-tRNA synthetase family.

Its subcellular location is the mitochondrion membrane. It carries out the reaction tRNA(Arg) + L-arginine + ATP = L-arginyl-tRNA(Arg) + AMP + diphosphate. In terms of biological role, catalyzes the attachment of arginine to tRNA(Arg) in a two-step reaction: arginine is first activated by ATP to form Arg-AMP and then transferred to the acceptor end of tRNA(Arg). In Pongo abelii (Sumatran orangutan), this protein is Probable arginine--tRNA ligase, mitochondrial (RARS2).